The chain runs to 252 residues: Trans-aconitate 2-methyltransferase (252 aa).

Belongs to the methyltransferase superfamily. Tam family.

The protein resides in the cytoplasm. It catalyses the reaction trans-aconitate + S-adenosyl-L-methionine = (E)-3-(methoxycarbonyl)pent-2-enedioate + S-adenosyl-L-homocysteine. Catalyzes the S-adenosylmethionine monomethyl esterification of trans-aconitate. This Escherichia coli (strain 55989 / EAEC) protein is Trans-aconitate 2-methyltransferase.